The primary structure comprises 306 residues: Methionyl-tRNA formyltransferase (306 aa).

Residue 108-111 participates in (6S)-5,6,7,8-tetrahydrofolate binding; that stretch reads SLLP.

It belongs to the Fmt family.

The enzyme catalyses L-methionyl-tRNA(fMet) + (6R)-10-formyltetrahydrofolate = N-formyl-L-methionyl-tRNA(fMet) + (6S)-5,6,7,8-tetrahydrofolate + H(+). Functionally, attaches a formyl group to the free amino group of methionyl-tRNA(fMet). The formyl group appears to play a dual role in the initiator identity of N-formylmethionyl-tRNA by promoting its recognition by IF2 and preventing the misappropriation of this tRNA by the elongation apparatus. The chain is Methionyl-tRNA formyltransferase from Pseudarthrobacter chlorophenolicus (strain ATCC 700700 / DSM 12829 / CIP 107037 / JCM 12360 / KCTC 9906 / NCIMB 13794 / A6) (Arthrobacter chlorophenolicus).